We begin with the raw amino-acid sequence, 160 residues long: Methyl-coenzyme M reductase operon protein D (160 aa).

In terms of assembly, MCR is composed of three subunits: alpha, beta, and gamma. The function of proteins C and D is not known.

The sequence is that of Methyl-coenzyme M reductase operon protein D (mcrD) from Methanococcus vannielii.